Reading from the N-terminus, the 343-residue chain is Dimethyladenosine transferase 1, mitochondrial (343 aa).

The N-terminal 27 residues, 1–27 (MAASGKLSTWRLPPLPTIREIIKLLRV), are a transit peptide targeting the mitochondrion. S-adenosyl-L-methionine is bound by residues Leu-38, Gly-63, Glu-85, Lys-86, Asp-111, Val-112, and Asn-141.

The protein belongs to the class I-like SAM-binding methyltransferase superfamily. rRNA adenine N(6)-methyltransferase family. KsgA subfamily. As to quaternary structure, interacts with mitochondrial RNA polymerase POLRMT. Interacts with TFAM. Bound to the maturing mtSSU until the late stages of assembly.

It is found in the mitochondrion. It carries out the reaction adenosine(N)/adenosine(N+1) in rRNA + 4 S-adenosyl-L-methionine = N(6)-dimethyladenosine(N)/N(6)-dimethyladenosine(N+1) in rRNA + 4 S-adenosyl-L-homocysteine + 4 H(+). In terms of biological role, S-adenosyl-L-methionine-dependent methyltransferase which specifically dimethylates mitochondrial 12S rRNA at the conserved stem loop. Also required for basal transcription of mitochondrial DNA, probably via its interaction with POLRMT and TFAM. Stimulates transcription independently of the methyltransferase activity. Its function is as follows. Mitochondrial methyltransferase which uses S-adenosyl methionine to dimethylate two highly conserved adjacent adenosine residues (A1583 and A1584) within the loop of helix 45 at the 3-prime end of 12S rRNA, thereby regulating the assembly or stability of the small subunit of the mitochondrial ribosome. Also required for basal transcription of mitochondrial DNA, probably via its interaction with POLRMT and TFAM. Stimulates transcription independently of the methyltransferase activity. The polypeptide is Dimethyladenosine transferase 1, mitochondrial (TFB1M) (Pongo abelii (Sumatran orangutan)).